The following is a 572-amino-acid chain: MRTSQYLLSTLKETPADAEVISHQLMLRAGMIRKLASGLYTWLPTGVRVLKKVENIVREEMNNAGAIEVLMPVVQPADLWQESGRWEQYGPELLRFVDRGERPFVLGPTHEEVITDLIRNELSSYKQLPLNFYQIQTKFRDEVRPRFGVMRSREFLMKDAYSFHTSQESLQETYDAMYAAYSKIFSRMGLDFRAVQADTGSIGGSASHEFQVLAQSGEDDVVFSDTSDYAANIELAEAIAPKEPRAAATQEMTLVDTPNAKTIAELVEQFNLPIEKTVKTLLVKAVEGSSFPLVALLVRGDHELNEVKAEKLPQVASPLTFATEEEIRAVVKAGPGSLGPVNMPIPVVIDRTVAAMSDFAAGANIDGKHYFGINWDRDVATPEIADIRNVVAGDPSPDGQGTLQIKRGIEVGHIFQLGTKYSEALKASVQGEDGRNQILTMGCYGIGVTRVVAAAIEQNYDERGIVWPDAIAPFQVAILPMNMHKSFRVQELAEKLYSELRAQGIEVLLDDRKERPGVMFADMELIGIPHTIVLGDRNLDNDDIEYKYRRNGEKQLIKTGDIVDYLVKQIKG.

This sequence belongs to the class-II aminoacyl-tRNA synthetase family. ProS type 1 subfamily. As to quaternary structure, homodimer.

Its subcellular location is the cytoplasm. It catalyses the reaction tRNA(Pro) + L-proline + ATP = L-prolyl-tRNA(Pro) + AMP + diphosphate. Its function is as follows. Catalyzes the attachment of proline to tRNA(Pro) in a two-step reaction: proline is first activated by ATP to form Pro-AMP and then transferred to the acceptor end of tRNA(Pro). As ProRS can inadvertently accommodate and process non-cognate amino acids such as alanine and cysteine, to avoid such errors it has two additional distinct editing activities against alanine. One activity is designated as 'pretransfer' editing and involves the tRNA(Pro)-independent hydrolysis of activated Ala-AMP. The other activity is designated 'posttransfer' editing and involves deacylation of mischarged Ala-tRNA(Pro). The misacylated Cys-tRNA(Pro) is not edited by ProRS. The chain is Proline--tRNA ligase from Escherichia coli O7:K1 (strain IAI39 / ExPEC).